The primary structure comprises 303 residues: Oxygen-dependent coproporphyrinogen-III oxidase (303 aa).

Serine 93 is a binding site for substrate. The a divalent metal cation site is built by histidine 97 and histidine 107. Histidine 107 (proton donor) is an active-site residue. 109 to 111 (NVR) is a substrate binding site. 2 residues coordinate a divalent metal cation: histidine 149 and histidine 179. An important for dimerization region spans residues 244 to 279 (YVEFNLVFDRGTLFGLQSGGRTESILLSMPPLAQWR). Substrate is bound at residue 262–264 (GGR).

This sequence belongs to the aerobic coproporphyrinogen-III oxidase family. As to quaternary structure, homodimer. The cofactor is a divalent metal cation.

The protein resides in the cytoplasm. It catalyses the reaction coproporphyrinogen III + O2 + 2 H(+) = protoporphyrinogen IX + 2 CO2 + 2 H2O. The protein operates within porphyrin-containing compound metabolism; protoporphyrin-IX biosynthesis; protoporphyrinogen-IX from coproporphyrinogen-III (O2 route): step 1/1. Functionally, involved in the heme biosynthesis. Catalyzes the aerobic oxidative decarboxylation of propionate groups of rings A and B of coproporphyrinogen-III to yield the vinyl groups in protoporphyrinogen-IX. This chain is Oxygen-dependent coproporphyrinogen-III oxidase, found in Bordetella parapertussis (strain 12822 / ATCC BAA-587 / NCTC 13253).